Consider the following 220-residue polypeptide: Riboflavin kinase (220 aa).

The tract at residues 1 to 92 (METDDQYYRA…LSRILAIKNN (92 aa)) is H-T-H motif-like. A riboflavin kinase region spans residues 93–220 (VVITGTVTSG…GDRVSVEVYT (128 aa)). 102 to 107 (GMGEGR) is a CDP binding site. Residues Thr131 and Asn133 each coordinate Mg(2+). FMN is bound by residues Thr188 and Glu195. 200-203 (KYLR) contributes to the CDP binding site.

Belongs to the archaeal riboflavin kinase family. Requires Mg(2+) as cofactor.

The catalysed reaction is riboflavin + CTP = CDP + FMN + H(+). Its pathway is cofactor biosynthesis; FMN biosynthesis; FMN from riboflavin (CTP route): step 1/1. Catalyzes the CTP-dependent phosphorylation of riboflavin (vitamin B2) to form flavin mononucleotide (FMN). This is Riboflavin kinase (ribK) from Thermoplasma acidophilum (strain ATCC 25905 / DSM 1728 / JCM 9062 / NBRC 15155 / AMRC-C165).